A 1052-amino-acid chain; its full sequence is Malignant fibrous histiocytoma-amplified sequence 1 (1052 aa).

N-acetylalanine is present on Ala-2. LRR repeat units follow at residues 64–85 (DIEALNLGNNGLEEVPEGLGSA), 88–109 (SLRVLVLRRNRFARLPPAVAEL), 112–133 (HLTELDVSHNRLTALGAEVVSA), 136–157 (ELRKLNLSHNQLPALPAQLGAL), 159–180 (HLEELDVSFNRLAHLPDSLSCL), 182–203 (RLRTLDVDHNQLTAFPRQLLQL), 205–226 (ALEELDVSSNRLRGLPEDISAL), 228–249 (ALKILWLSGAELGTLPAGFCEL), 251–272 (SLESLMLDNNGLQALPAQFSCL), 274–296 (RLKMLNLSSNLFEEFPAALLPLA), 297–318 (GLEELYLSRNQLTSVPSLISGL), 320–341 (RLLTLWLDNNRIRYLPDSIVEL), and 343–364 (GLEELVLQGNQIAVLPDHFGQL). The tract at residues 64-364 (DIEALNLGNN…AVLPDHFGQL (301 aa)) is required for interaction with PJA2. Residues 64-649 (DIEALNLGNN…DKLLSVAEHR (586 aa)) are required for interaction with PPP2R2A. Positions 403–649 (QPAVQPRLKL…DKLLSVAEHR (247 aa)) constitute a Roc domain. Lys-601 is modified (N6-acetyllysine).

As to quaternary structure, interacts with RAF1. Interacts with HSPD1. Interacts with PPP2CA; retains PPP2CA into the cytoplasm and excludes it from the nucleus. Interacts with PPP2R2A; the interaction is direct. Interacts with PJA2. Ubiquitinated. Ubiquitination by PJA2 does not lead MFHAS1 to proteasomal degradation but positively regulates its function in polarization of macrophages. In terms of tissue distribution, ubiquitously expressed. Overexpressed in malignant fibrous histiocytomas. Expressed in red blood cells (at protein level).

It is found in the cytoplasm. Probable GTP-binding protein. Functions in innate immunity and more specifically the inflammatory response as a regulator of the Toll-like receptor TLR2 and TLR4 signaling pathways. Negatively regulates the part of the TLR4 signaling pathway that leads to the activation of the transcription factor AP-1. By retaining the phosphatase complex PP2A into the cytoplasm, prevents the dephosphorylation of the AP-1 subunit JUN which is required for proper activation of the transcription factor. Both inhibits and activates the TLR2-dependent signaling pathway. Positively regulates the TLR2 signaling pathway to activate specifically the downstream p38 and JNK MAP kinases and promote the polarization of macrophages toward the pro-inflammatory M1 phenotype. It may also play a role in the regulation of inflammation induced by high glucose through the PKB/AKT signaling pathway. Also involved in erythrocyte differentiation through activation of the ERK1/ERK2 signaling pathway. In Homo sapiens (Human), this protein is Malignant fibrous histiocytoma-amplified sequence 1.